The primary structure comprises 299 residues: Homoserine O-acetyltransferase (299 aa).

Residue cysteine 142 is the Acyl-thioester intermediate of the active site. Substrate is bound by residues lysine 163 and serine 192. Histidine 235 acts as the Proton acceptor in catalysis. Glutamate 237 is an active-site residue. Arginine 249 provides a ligand contact to substrate.

This sequence belongs to the MetA family.

It localises to the cytoplasm. The enzyme catalyses L-homoserine + acetyl-CoA = O-acetyl-L-homoserine + CoA. It functions in the pathway amino-acid biosynthesis; L-methionine biosynthesis via de novo pathway; O-acetyl-L-homoserine from L-homoserine: step 1/1. In terms of biological role, transfers an acetyl group from acetyl-CoA to L-homoserine, forming acetyl-L-homoserine. This Synechococcus elongatus (strain ATCC 33912 / PCC 7942 / FACHB-805) (Anacystis nidulans R2) protein is Homoserine O-acetyltransferase.